The following is a 466-amino-acid chain: MEVATDQPRWMTHHAVLNGQHPESHHPGLAHNYMEPAQLLPPDEVDVFFNHLDSQGNPYYANSAHARARVSYSQAHARLTGSQMCRPHLIHSPGIPWLDSSKAALSAHHHNPWTVNPFTKTPLHPSAAGAPGAISVYPGSSTSSTASVSSLTPASHSGSHLFGFPPTPPKEVSPDPNSTSAASPSSSAGARQEDKDSIKYQVSLSEGMKMESASPLRSSLTSMGAQPSTHHPIPTYPSYVPAAHDYSSSLFHPGSFLGGPASSFTPKPRSKARSCSEGRECVNCGATATPLWRRDGTGHYLCNACGLYHKMNGQNRPLIKPKRRLSAARRAGTCCANCQTTTTTLWRRNANGDPVCNACGLYYKLHNVNRPLTMKKEGIQTRNRKMSNKSKKSKKGSECFEELSKCMQEKSSPFSAAALASHMAPMGHLPPFSHSGHILPTPTPIHPSSSISFGHPHPSSMVTAMG.

2 stretches are compositionally biased toward low complexity: residues 139 to 155 and 174 to 188; these read GSST…TPAS and PDPN…SSSA. The interval 139–196 is disordered; it reads GSSTSSTASVSSLTPASHSGSHLFGFPPTPPKEVSPDPNSTSAASPSSSAGARQEDKD. 2 GATA-type zinc fingers span residues 281–305 and 335–359; these read CVNC…CNAC and CANC…CNAC. A disordered region spans residues 436 to 466; sequence GHILPTPTPIHPSSSISFGHPHPSSMVTAMG.

Expressed in all developmental stages of erythroid cells but is additionally found in a limited subset of other tissues.

It is found in the nucleus. Functionally, transcriptional activator which probably serves as a general switch factor for cell-specific development. It binds to DNA sites with the consensus sequence 5'-[AT]GATA[AG]-3' within regulatory regions of genes. This Gallus gallus (Chicken) protein is GATA-binding factor 2 (GATA2).